Here is a 329-residue protein sequence, read N- to C-terminus: Acetyl-coenzyme A carboxylase carboxyl transferase subunit alpha (329 aa).

The region spanning 40-294 is the CoA carboxyltransferase C-terminal domain; sequence QLETLAARRR…REAIERHLDE (255 aa).

The protein belongs to the AccA family. As to quaternary structure, acetyl-CoA carboxylase is a heterohexamer composed of biotin carboxyl carrier protein (AccB), biotin carboxylase (AccC) and two subunits each of ACCase subunit alpha (AccA) and ACCase subunit beta (AccD).

It is found in the cytoplasm. It catalyses the reaction N(6)-carboxybiotinyl-L-lysyl-[protein] + acetyl-CoA = N(6)-biotinyl-L-lysyl-[protein] + malonyl-CoA. Its pathway is lipid metabolism; malonyl-CoA biosynthesis; malonyl-CoA from acetyl-CoA: step 1/1. In terms of biological role, component of the acetyl coenzyme A carboxylase (ACC) complex. First, biotin carboxylase catalyzes the carboxylation of biotin on its carrier protein (BCCP) and then the CO(2) group is transferred by the carboxyltransferase to acetyl-CoA to form malonyl-CoA. The chain is Acetyl-coenzyme A carboxylase carboxyl transferase subunit alpha from Prochlorococcus marinus (strain MIT 9313).